Consider the following 452-residue polypeptide: tRNA modification GTPase MnmE (452 aa).

(6S)-5-formyl-5,6,7,8-tetrahydrofolate contacts are provided by arginine 25, glutamate 82, and arginine 125. The TrmE-type G domain occupies 221–374 (GLHVVLAGKP…LRARLLALAG (154 aa)). Asparagine 231 is a binding site for K(+). GTP is bound by residues 231-236 (NVGKSS), 250-256 (TPIAGTT), 275-278 (DTAG), and 355-357 (SAR). Serine 235 contacts Mg(2+). Residues threonine 250, isoleucine 252, and threonine 255 each coordinate K(+). A Mg(2+)-binding site is contributed by threonine 256. Lysine 452 contacts (6S)-5-formyl-5,6,7,8-tetrahydrofolate.

This sequence belongs to the TRAFAC class TrmE-Era-EngA-EngB-Septin-like GTPase superfamily. TrmE GTPase family. Homodimer. Heterotetramer of two MnmE and two MnmG subunits. The cofactor is K(+).

The protein localises to the cytoplasm. Its function is as follows. Exhibits a very high intrinsic GTPase hydrolysis rate. Involved in the addition of a carboxymethylaminomethyl (cmnm) group at the wobble position (U34) of certain tRNAs, forming tRNA-cmnm(5)s(2)U34. The protein is tRNA modification GTPase MnmE of Bordetella petrii (strain ATCC BAA-461 / DSM 12804 / CCUG 43448).